The primary structure comprises 156 residues: Cyanate hydratase (156 aa).

Residues Arg96, Glu99, and Ser122 contribute to the active site.

It belongs to the cyanase family.

It catalyses the reaction cyanate + hydrogencarbonate + 3 H(+) = NH4(+) + 2 CO2. Functionally, catalyzes the reaction of cyanate with bicarbonate to produce ammonia and carbon dioxide. The sequence is that of Cyanate hydratase from Mycobacteroides abscessus (strain ATCC 19977 / DSM 44196 / CCUG 20993 / CIP 104536 / JCM 13569 / NCTC 13031 / TMC 1543 / L948) (Mycobacterium abscessus).